A 101-amino-acid polypeptide reads, in one-letter code: Small ribosomal subunit protein uS14 (101 aa).

Belongs to the universal ribosomal protein uS14 family. In terms of assembly, part of the 30S ribosomal subunit. Contacts proteins S3 and S10.

Binds 16S rRNA, required for the assembly of 30S particles and may also be responsible for determining the conformation of the 16S rRNA at the A site. The protein is Small ribosomal subunit protein uS14 of Janthinobacterium sp. (strain Marseille) (Minibacterium massiliensis).